Consider the following 329-residue polypeptide: Phospho-N-acetylmuramoyl-pentapeptide-transferase (329 aa).

Transmembrane regions (helical) follow at residues 1–21, 53–73, 76–96, 109–129, 141–161, 175–195, 198–218, 237–257, and 309–329; these read MLLN…IGIP, MGGF…ALVF, FSPA…IGFL, GLTA…SYFI, ILSW…IWLV, GLAS…AVVH, YDVL…FVFN, FLAI…IGAV, and IVFW…YFAF.

Belongs to the glycosyltransferase 4 family. MraY subfamily. Mg(2+) serves as cofactor.

Its subcellular location is the cell membrane. The catalysed reaction is UDP-N-acetyl-alpha-D-muramoyl-L-alanyl-gamma-D-glutamyl-L-lysyl-D-alanyl-D-alanine + di-trans,octa-cis-undecaprenyl phosphate = Mur2Ac(oyl-L-Ala-gamma-D-Glu-L-Lys-D-Ala-D-Ala)-di-trans,octa-cis-undecaprenyl diphosphate + UMP. It participates in cell wall biogenesis; peptidoglycan biosynthesis. In terms of biological role, catalyzes the initial step of the lipid cycle reactions in the biosynthesis of the cell wall peptidoglycan: transfers peptidoglycan precursor phospho-MurNAc-pentapeptide from UDP-MurNAc-pentapeptide onto the lipid carrier undecaprenyl phosphate, yielding undecaprenyl-pyrophosphoryl-MurNAc-pentapeptide, known as lipid I. The protein is Phospho-N-acetylmuramoyl-pentapeptide-transferase of Lactococcus lactis subsp. cremoris (strain SK11).